The chain runs to 264 residues: Putative hydro-lyase Cgl2544/cg2803 (264 aa).

The protein belongs to the D-glutamate cyclase family.

The chain is Putative hydro-lyase Cgl2544/cg2803 from Corynebacterium glutamicum (strain ATCC 13032 / DSM 20300 / JCM 1318 / BCRC 11384 / CCUG 27702 / LMG 3730 / NBRC 12168 / NCIMB 10025 / NRRL B-2784 / 534).